The chain runs to 209 residues: Octanoyltransferase (209 aa).

The 180-residue stretch at 30–209 (DHEPEIIYLV…IQTEFNKIFK (180 aa)) folds into the BPL/LPL catalytic domain. Substrate is bound by residues 69-76 (RGGKFTFH), 143-145 (AIG), and 156-158 (GVA). Cys174 (acyl-thioester intermediate) is an active-site residue.

It belongs to the LipB family.

It is found in the cytoplasm. It catalyses the reaction octanoyl-[ACP] + L-lysyl-[protein] = N(6)-octanoyl-L-lysyl-[protein] + holo-[ACP] + H(+). The protein operates within protein modification; protein lipoylation via endogenous pathway; protein N(6)-(lipoyl)lysine from octanoyl-[acyl-carrier-protein]: step 1/2. Functionally, catalyzes the transfer of endogenously produced octanoic acid from octanoyl-acyl-carrier-protein onto the lipoyl domains of lipoate-dependent enzymes. Lipoyl-ACP can also act as a substrate although octanoyl-ACP is likely to be the physiological substrate. This is Octanoyltransferase from Rickettsia peacockii (strain Rustic).